Consider the following 438-residue polypeptide: 3-phosphoshikimate 1-carboxyvinyltransferase (438 aa).

Lys-23, Ser-24, and Arg-28 together coordinate 3-phosphoshikimate. Lys-23 contributes to the phosphoenolpyruvate binding site. Phosphoenolpyruvate is bound by residues Gly-94 and Arg-122. Positions 167, 169, 321, and 348 each coordinate 3-phosphoshikimate. Gln-169 serves as a coordination point for phosphoenolpyruvate. Asp-321 serves as the catalytic Proton acceptor. 2 residues coordinate phosphoenolpyruvate: Arg-352 and Arg-393.

It belongs to the EPSP synthase family. As to quaternary structure, monomer.

It is found in the cytoplasm. It carries out the reaction 3-phosphoshikimate + phosphoenolpyruvate = 5-O-(1-carboxyvinyl)-3-phosphoshikimate + phosphate. The protein operates within metabolic intermediate biosynthesis; chorismate biosynthesis; chorismate from D-erythrose 4-phosphate and phosphoenolpyruvate: step 6/7. Functionally, catalyzes the transfer of the enolpyruvyl moiety of phosphoenolpyruvate (PEP) to the 5-hydroxyl of shikimate-3-phosphate (S3P) to produce enolpyruvyl shikimate-3-phosphate and inorganic phosphate. This Helicobacter hepaticus (strain ATCC 51449 / 3B1) protein is 3-phosphoshikimate 1-carboxyvinyltransferase.